The following is a 459-amino-acid chain: Sorting nexin-8 (459 aa).

Residues 1-37 (MTGRAMDPLPSPAVAAAAEAEADEEADPPATGPRTSQ) are disordered. In terms of domain architecture, PX spans 68–176 (AKDTVQVELI…KLFLSFSGSD (109 aa)). The a 1,2-diacyl-sn-glycero-3-phospho-(1D-myo-inositol-3-phosphate) site is built by R104, K130, and R143. The residue at position 446 (T446) is a Phosphothreonine. Position 450 is a phosphoserine (S450).

This sequence belongs to the sorting nexin family.

The protein localises to the early endosome membrane. In terms of biological role, may be involved in several stages of intracellular trafficking. May play a role in intracellular protein transport from early endosomes to the trans-Golgi network. The polypeptide is Sorting nexin-8 (Snx8) (Mus musculus (Mouse)).